Consider the following 336-residue polypeptide: tRNA N6-adenosine threonylcarbamoyltransferase (336 aa).

Fe cation is bound by residues histidine 114 and histidine 118. Residues leucine 136 to glycine 140, aspartate 169, glycine 182, aspartate 186, and asparagine 275 each bind substrate. Aspartate 301 serves as a coordination point for Fe cation.

Belongs to the KAE1 / TsaD family. The cofactor is Fe(2+).

It is found in the cytoplasm. The enzyme catalyses L-threonylcarbamoyladenylate + adenosine(37) in tRNA = N(6)-L-threonylcarbamoyladenosine(37) in tRNA + AMP + H(+). Required for the formation of a threonylcarbamoyl group on adenosine at position 37 (t(6)A37) in tRNAs that read codons beginning with adenine. Is involved in the transfer of the threonylcarbamoyl moiety of threonylcarbamoyl-AMP (TC-AMP) to the N6 group of A37, together with TsaE and TsaB. TsaD likely plays a direct catalytic role in this reaction. The chain is tRNA N6-adenosine threonylcarbamoyltransferase from Streptococcus mutans serotype c (strain ATCC 700610 / UA159).